The following is a 256-amino-acid chain: Lysine-rich coiled-coil protein 1 (256 aa).

Disordered regions lie at residues Arg62–Val84 and Thr144–Phe256. A compositionally biased stretch (polar residues) spans Pro64–Gln79. Composition is skewed to basic and acidic residues over residues His161–Lys188 and Lys218–Glu227. Residues Glu209–Met247 are a coiled coil.

The protein is Lysine-rich coiled-coil protein 1 (Krcc1) of Mus musculus (Mouse).